The chain runs to 321 residues: Glucokinase (321 aa).

Residue 8-13 (GDVGGT) participates in ATP binding.

This sequence belongs to the bacterial glucokinase family.

The protein localises to the cytoplasm. It carries out the reaction D-glucose + ATP = D-glucose 6-phosphate + ADP + H(+). The protein is Glucokinase of Klebsiella pneumoniae subsp. pneumoniae (strain ATCC 700721 / MGH 78578).